The primary structure comprises 85 residues: Progonadoliberin-2 (85 aa).

The first 23 residues, 1–23, serve as a signal peptide directing secretion; the sequence is MCVSRLALLLGLLLCVGAQLSFA. Pyrrolidone carboxylic acid is present on Q24. G33 carries the glycine amide modification.

This sequence belongs to the GnRH family. In terms of tissue distribution, expressed in only one cell group in the mesencephalon.

The protein localises to the secreted. Its function is as follows. Stimulates the secretion of gonadotropins. The polypeptide is Progonadoliberin-2 (gnrh2) (Haplochromis burtoni (Burton's mouthbrooder)).